The chain runs to 145 residues: 3-hydroxyacyl-[acyl-carrier-protein] dehydratase FabZ (145 aa).

Residue histidine 47 is part of the active site.

Belongs to the thioester dehydratase family. FabZ subfamily.

It is found in the cytoplasm. The enzyme catalyses a (3R)-hydroxyacyl-[ACP] = a (2E)-enoyl-[ACP] + H2O. Involved in unsaturated fatty acids biosynthesis. Catalyzes the dehydration of short chain beta-hydroxyacyl-ACPs and long chain saturated and unsaturated beta-hydroxyacyl-ACPs. The chain is 3-hydroxyacyl-[acyl-carrier-protein] dehydratase FabZ from Geotalea uraniireducens (strain Rf4) (Geobacter uraniireducens).